Consider the following 730-residue polypeptide: Zinc finger protein 615 (730 aa).

One can recognise a KRAB domain in the interval 7–78; the sequence is LTLEDVAVDF…EDEIYSRICF (72 aa). C2H2-type zinc fingers lie at residues 203-225, 231-253, 259-281, 287-309, 315-337, 343-365, 371-393, 399-421, 427-449, 455-477, 483-505, 511-533, 539-561, 567-589, 595-617, 623-645, 651-673, 679-701, and 707-729; these read HVCSECGKAFLKLSQFIDHQRVH, HVCSMCGKAFSRKSRLMDHQRTH, YECTECDKTFLKKSQLNIHQKTH, YTCSECGKAFIKKCRLIYHQRTH, HGCSVCGKAFSTKFSLTTHQKTH, YICSECGKGFIEKRRLIAHHRTH, FICNKCGKGFTLKNSLITHQQTH, YTCSECGKGFSMKHCLMVHQRTH, YKCNECGKGFALKSPLIRHQRTH, YVCTECRKGFTMKSDLIVHQRTH, YICNDCGKGFTVKSRLIVHQRTH, YVCGECGKGFPAKIRLMGHQRTH, YICDECGKGFTEKSHLNVHRRTH, YVCSECGKGLTGKSMLIAHQRTH, YICNECGKGFTMKSTLSIHQQTH, YKCNECDKSFRKKTCLIQHQRFH, FACTECGKFSLRKNDLITHQRIH, YKCSDCGKAFTTKSGLNVHQRKH, and YGCSDCGKAFAHLSILVKHKRIH.

It belongs to the krueppel C2H2-type zinc-finger protein family.

The protein localises to the nucleus. Its function is as follows. May be involved in transcriptional regulation. The chain is Zinc finger protein 615 (ZNF615) from Pongo abelii (Sumatran orangutan).